Reading from the N-terminus, the 259-residue chain is Type III pantothenate kinase (259 aa).

9–16 (DAGNSRIK) is an ATP binding site. Residues tyrosine 93 and 100–103 (GSDR) each bind substrate. Aspartate 102 acts as the Proton acceptor in catalysis. Threonine 126 provides a ligand contact to ATP. Threonine 190 is a substrate binding site.

It belongs to the type III pantothenate kinase family. Homodimer. The cofactor is NH4(+). It depends on K(+) as a cofactor.

It is found in the cytoplasm. It carries out the reaction (R)-pantothenate + ATP = (R)-4'-phosphopantothenate + ADP + H(+). It functions in the pathway cofactor biosynthesis; coenzyme A biosynthesis; CoA from (R)-pantothenate: step 1/5. In terms of biological role, catalyzes the phosphorylation of pantothenate (Pan), the first step in CoA biosynthesis. In Burkholderia pseudomallei (strain K96243), this protein is Type III pantothenate kinase.